The sequence spans 142 residues: 3-hydroxyacyl-[acyl-carrier-protein] dehydratase FabZ (142 aa).

The active site involves histidine 48.

Belongs to the thioester dehydratase family. FabZ subfamily.

Its subcellular location is the cytoplasm. The catalysed reaction is a (3R)-hydroxyacyl-[ACP] = a (2E)-enoyl-[ACP] + H2O. Functionally, involved in unsaturated fatty acids biosynthesis. Catalyzes the dehydration of short chain beta-hydroxyacyl-ACPs and long chain saturated and unsaturated beta-hydroxyacyl-ACPs. In Anoxybacillus flavithermus (strain DSM 21510 / WK1), this protein is 3-hydroxyacyl-[acyl-carrier-protein] dehydratase FabZ.